The following is a 198-amino-acid chain: Prostamide/prostaglandin F synthase (198 aa).

Tyrosine 108 carries the phosphotyrosine modification.

Belongs to the peroxiredoxin-like PRXL2 family. Prostamide/prostaglandin F synthase subfamily.

Its subcellular location is the cytoplasm. The protein localises to the cytosol. It carries out the reaction prostaglandin H2 + [thioredoxin]-dithiol = prostaglandin F2alpha + [thioredoxin]-disulfide. The catalysed reaction is prostamide F2alpha + [thioredoxin]-disulfide = prostamide H2 + [thioredoxin]-dithiol. Functionally, catalyzes the reduction of prostaglandin-ethanolamide H(2) (prostamide H(2)) to prostamide F(2alpha) with NADPH as proton donor. Also able to reduce prostaglandin H(2) to prostaglandin F(2alpha). This Pongo abelii (Sumatran orangutan) protein is Prostamide/prostaglandin F synthase (PRXL2B).